Reading from the N-terminus, the 406-residue chain is Argininosuccinate synthase (406 aa).

Residues 11-19 (AYSGGLDTS) and A38 contribute to the ATP site. The L-citrulline site is built by Y91 and S96. ATP is bound at residue G121. L-aspartate is bound by residues T123, N127, and D128. N127 is an L-citrulline binding site. Residues R131, S181, S190, E266, and Y278 each coordinate L-citrulline.

It belongs to the argininosuccinate synthase family. Type 1 subfamily. Homotetramer.

It is found in the cytoplasm. The catalysed reaction is L-citrulline + L-aspartate + ATP = 2-(N(omega)-L-arginino)succinate + AMP + diphosphate + H(+). Its pathway is amino-acid biosynthesis; L-arginine biosynthesis; L-arginine from L-ornithine and carbamoyl phosphate: step 2/3. The chain is Argininosuccinate synthase from Campylobacter jejuni subsp. jejuni serotype O:23/36 (strain 81-176).